The following is a 70-amino-acid chain: uncharacterized protein (70 aa).

A helical membrane pass occupies residues 14 to 34 (CLVVWFACVYSLLILVVLLLI).

It localises to the virion membrane. This is an uncharacterized protein from Homo sapiens (Human).